A 626-amino-acid polypeptide reads, in one-letter code: Phosphomethylpyrimidine synthase (626 aa).

Residues 92-106 (AREVKPEDNGLKGPD) are compositionally biased toward basic and acidic residues. A disordered region spans residues 92–117 (AREVKPEDNGLKGPDRSAGVPPFPNV). Substrate contacts are provided by residues Asn219, Met248, Tyr277, His313, 333–335 (SRG), 374–377 (DGLR), and Glu413. Residue His417 coordinates Zn(2+). Tyr440 is a binding site for substrate. Zn(2+) is bound at residue His481. Positions 561, 564, and 569 each coordinate [4Fe-4S] cluster.

Belongs to the ThiC family. As to quaternary structure, homodimer. [4Fe-4S] cluster is required as a cofactor.

It catalyses the reaction 5-amino-1-(5-phospho-beta-D-ribosyl)imidazole + S-adenosyl-L-methionine = 4-amino-2-methyl-5-(phosphooxymethyl)pyrimidine + CO + 5'-deoxyadenosine + formate + L-methionine + 3 H(+). Its pathway is cofactor biosynthesis; thiamine diphosphate biosynthesis. Its function is as follows. Catalyzes the synthesis of the hydroxymethylpyrimidine phosphate (HMP-P) moiety of thiamine from aminoimidazole ribotide (AIR) in a radical S-adenosyl-L-methionine (SAM)-dependent reaction. In Novosphingobium aromaticivorans (strain ATCC 700278 / DSM 12444 / CCUG 56034 / CIP 105152 / NBRC 16084 / F199), this protein is Phosphomethylpyrimidine synthase.